A 296-amino-acid polypeptide reads, in one-letter code: Light-independent protochlorophyllide reductase iron-sulfur ATP-binding protein (296 aa).

ATP-binding positions include 39-44 (GIGKST) and Lys68. Residue Ser43 participates in Mg(2+) binding. Residues Cys124 and Cys158 each contribute to the [4Fe-4S] cluster site. An ATP-binding site is contributed by 209–210 (NR).

Belongs to the NifH/BchL/ChlL family. In terms of assembly, homodimer. Protochlorophyllide reductase is composed of three subunits; ChlL, ChlN and ChlB. [4Fe-4S] cluster serves as cofactor.

The enzyme catalyses chlorophyllide a + oxidized 2[4Fe-4S]-[ferredoxin] + 2 ADP + 2 phosphate = protochlorophyllide a + reduced 2[4Fe-4S]-[ferredoxin] + 2 ATP + 2 H2O. It functions in the pathway porphyrin-containing compound metabolism; chlorophyll biosynthesis (light-independent). Functionally, component of the dark-operative protochlorophyllide reductase (DPOR) that uses Mg-ATP and reduced ferredoxin to reduce ring D of protochlorophyllide (Pchlide) to form chlorophyllide a (Chlide). This reaction is light-independent. The L component serves as a unique electron donor to the NB-component of the complex, and binds Mg-ATP. This chain is Light-independent protochlorophyllide reductase iron-sulfur ATP-binding protein, found in Prochlorococcus marinus (strain MIT 9211).